The following is a 430-amino-acid chain: MQEESSKELYSKAVKLIPGGVNSPVRACRNVGCEPVFIESAKGAYLTTVDGQELLDFVLSWGAIILGHTNSTVTNAIKKAASNGTTFGAPCKAEVLLAKEIIDAFPGMDMIRMVSSGTEATMSALRLARGVTGRNKVLKFIGCYHGHADPFLASAGSGVATLSIPGTPGVPEVTVRDTLLAPYNDLSTVKDLFVMYGKDLAAVFVEPIAANMGLIPPKEGFLKGLRALCDAHGTLLIMDEVITGFRVAYGGAQTRFDITPDLTTLGKIIGGGLPIGAYGGKAKYMEHIAPLGEIYQAGTLSGNPLVMTAGFETLQLLKDINYTILEKQVATFANELEVILKDKGVPVQVSNFASMFTVFFTNNELKSFDDVKTTNTQLYSILFRSMQKNNIFLVPSPFETNMVSFAHKEKEFEKALIAAKKIMFNITDVN.

The residue at position 267 (Lys267) is an N6-(pyridoxal phosphate)lysine.

It belongs to the class-III pyridoxal-phosphate-dependent aminotransferase family. HemL subfamily. As to quaternary structure, homodimer. Pyridoxal 5'-phosphate is required as a cofactor.

The protein resides in the cytoplasm. The catalysed reaction is (S)-4-amino-5-oxopentanoate = 5-aminolevulinate. Its pathway is porphyrin-containing compound metabolism; protoporphyrin-IX biosynthesis; 5-aminolevulinate from L-glutamyl-tRNA(Glu): step 2/2. In Lawsonia intracellularis (strain PHE/MN1-00), this protein is Glutamate-1-semialdehyde 2,1-aminomutase.